The primary structure comprises 209 residues: 3-demethoxyubiquinol 3-hydroxylase (209 aa).

Low complexity predominate over residues Pro-23 to Pro-36. Residues Pro-23–Ser-42 form a disordered region. Residues Glu-58, Glu-88, His-91, Glu-140, Glu-172, and His-175 each coordinate Fe cation.

It belongs to the COQ7 family. Fe cation is required as a cofactor.

Its subcellular location is the cell membrane. It catalyses the reaction a 5-methoxy-2-methyl-3-(all-trans-polyprenyl)benzene-1,4-diol + AH2 + O2 = a 3-demethylubiquinol + A + H2O. It functions in the pathway cofactor biosynthesis; ubiquinone biosynthesis. In terms of biological role, catalyzes the hydroxylation of 2-nonaprenyl-3-methyl-6-methoxy-1,4-benzoquinol during ubiquinone biosynthesis. This chain is 3-demethoxyubiquinol 3-hydroxylase, found in Variovorax paradoxus (strain S110).